The primary structure comprises 294 residues: 2-oxoglutaramate amidase (294 aa).

In terms of domain architecture, CN hydrolase spans 16–261 (LDVAAVQVKF…EAVLRATLNF (246 aa)). Glutamate 55 acts as the Proton acceptor in catalysis. Lysine 129 acts as the Proton donor in catalysis. Cysteine 168 functions as the Nucleophile in the catalytic mechanism.

The protein belongs to the carbon-nitrogen hydrolase superfamily. NIT1/NIT2 family.

The catalysed reaction is 2-oxoglutaramate + H2O = 2-oxoglutarate + NH4(+). The protein operates within alkaloid degradation; nicotine degradation. In terms of biological role, catalyzes the conversion of 2-oxoglutaramate to 2-oxoglutarate. Together with glutamate dehydrogenase, may form a physiologically relevant enzyme couple, leading to transformation of metabolically inert 2-oxoglutaramate derived from trihydroxypyridine into glutamate, a central compound of nitrogen metabolism. This chain is 2-oxoglutaramate amidase, found in Paenarthrobacter nicotinovorans (Arthrobacter nicotinovorans).